We begin with the raw amino-acid sequence, 237 residues long: Sugar fermentation stimulation protein homolog (237 aa).

The protein belongs to the SfsA family.

The chain is Sugar fermentation stimulation protein homolog from Pseudomonas putida (strain GB-1).